The sequence spans 199 residues: Molybdenum cofactor guanylyltransferase (199 aa).

GTP is bound by residues 12–14, Lys25, Asn53, Asp71, and Asp101; that span reads LAG. Asp101 is a binding site for Mg(2+).

It belongs to the MobA family. In terms of assembly, monomer. Requires Mg(2+) as cofactor.

The protein resides in the cytoplasm. It carries out the reaction Mo-molybdopterin + GTP + H(+) = Mo-molybdopterin guanine dinucleotide + diphosphate. Transfers a GMP moiety from GTP to Mo-molybdopterin (Mo-MPT) cofactor (Moco or molybdenum cofactor) to form Mo-molybdopterin guanine dinucleotide (Mo-MGD) cofactor. The polypeptide is Molybdenum cofactor guanylyltransferase (Polynucleobacter asymbioticus (strain DSM 18221 / CIP 109841 / QLW-P1DMWA-1) (Polynucleobacter necessarius subsp. asymbioticus)).